A 60-amino-acid polypeptide reads, in one-letter code: MSEKTVKVQLVKSLIGTRESHRATVRGLGLRRLNSVSELQDTPAVRGMINKVSYLVKVIA.

The protein belongs to the universal ribosomal protein uL30 family. As to quaternary structure, part of the 50S ribosomal subunit.

The protein is Large ribosomal subunit protein uL30 of Burkholderia ambifaria (strain MC40-6).